The following is a 200-amino-acid chain: Protein Rv0461 (200 aa).

Residues 47-67 (DRAGKSWPGSTPKPQEDPVGV) form a disordered region. 3 helical membrane-spanning segments follow: residues 102 to 122 (FVLV…SLFY), 134 to 154 (VFVV…LALV), and 159 to 179 (LITA…AAAA).

Its subcellular location is the cell membrane. This is Protein Rv0461 from Mycobacterium tuberculosis (strain ATCC 25618 / H37Rv).